The following is a 499-amino-acid chain: Maturase K (499 aa).

The protein belongs to the intron maturase 2 family. MatK subfamily.

It localises to the plastid. The protein localises to the chloroplast. Functionally, usually encoded in the trnK tRNA gene intron. Probably assists in splicing its own and other chloroplast group II introns. The chain is Maturase K from Gymnocladus chinensis (Soap tree).